Consider the following 1343-residue polypeptide: Xanthine dehydrogenase (1343 aa).

Residues 8 to 95 (SELVFFVNGK…GCAVTTVEGI (88 aa)) enclose the 2Fe-2S ferredoxin-type domain. Residues Cys47, Cys52, Cys55, Cys77, Cys117, Cys120, Cys152, and Cys154 each coordinate [2Fe-2S] cluster. The FAD-binding PCMH-type domain occupies 235 to 424 (FSSERVTWYR…LGIHFQKTTP (190 aa)). Residues 263 to 270 (LVVGNTEV), Phe343, 353 to 357 (CLGGN), Asp366, Leu414, and Lys432 contribute to the FAD site. 2 residues coordinate Mo-molybdopterin: Gln780 and Phe811. Positions 815 and 893 each coordinate substrate. Position 925 (Arg925) interacts with Mo-molybdopterin. A substrate-binding site is contributed by Phe927. Position 1092 (Ala1092) interacts with Mo-molybdopterin. Glu1275 serves as the catalytic Proton acceptor.

It belongs to the xanthine dehydrogenase family. As to quaternary structure, homodimer. Requires FAD as cofactor. Mo-molybdopterin serves as cofactor. [2Fe-2S] cluster is required as a cofactor.

The protein resides in the peroxisome. The enzyme catalyses xanthine + NAD(+) + H2O = urate + NADH + H(+). It carries out the reaction hypoxanthine + NAD(+) + H2O = xanthine + NADH + H(+). Functionally, key enzyme in purine degradation. Catalyzes the oxidation of hypoxanthine to xanthine. Catalyzes the oxidation of xanthine to uric acid. The sequence is that of Xanthine dehydrogenase (ry) from Drosophila pseudoobscura pseudoobscura (Fruit fly).